Here is a 258-residue protein sequence, read N- to C-terminus: MASPREENVYMAKLAEQAERYEEMVEFMEKVVAAADGAEELTVEERNLLSVAYKNVIGARRASWRIISSIEQKEESRGNEDHVASIKEYRSKIESELTSICNGILKLLDSKLIGSAATGDSKVFYLKMKGDYHRYLAEFKTGAERKEAAENTLSAYKAAQDIANAELAPTHPIRLGLALNFSVFYYEILNSPDRACNLAKQAFDEAIAELDTLGEESYKDSTLIMQLLRDNLTLWTSDMQDDGTDEIKEATPKPDDNE.

Residues 238–258 (DMQDDGTDEIKEATPKPDDNE) are disordered. Positions 245–258 (DEIKEATPKPDDNE) are enriched in basic and acidic residues.

It belongs to the 14-3-3 family. In terms of assembly, homodimer.

The sequence is that of 14-3-3 protein 6 (TFT6) from Solanum lycopersicum (Tomato).